The chain runs to 48 residues: Entericidin B (48 aa).

An N-terminal signal peptide occupies residues 1-21 (MVKKTIAAIFSVLVLSSVLTA). Residue cysteine 22 is the site of N-palmitoyl cysteine attachment. A lipid anchor (S-diacylglycerol cysteine) is attached at cysteine 22.

This sequence belongs to the EcnA/EcnB lipoprotein family.

It localises to the cell membrane. Functionally, plays a role in the bacteriolysis. Is activated under conditions of high osmolarity by the factor sigma S. Entericidin A functions as an antidote. This Citrobacter freundii protein is Entericidin B (ecnB).